The primary structure comprises 203 residues: Somatotropin (203 aa).

The N-terminal stretch at 1 to 17 (MDRVVLMLSVLSLGVSS) is a signal peptide. Glutamine 18 carries the post-translational modification Pyrrolidone carboxylic acid. Histidine 36 contributes to the Zn(2+) binding site. Cysteine 68 and cysteine 176 are joined by a disulfide. Glutamate 185 provides a ligand contact to Zn(2+). Cysteine 193 and cysteine 201 are joined by a disulfide.

Belongs to the somatotropin/prolactin family.

It localises to the secreted. Functionally, growth hormone plays an important role in growth control and is involved in the regulation of several anabolic processes. Implicated as an osmoregulatory substance important for seawater adaptation. The chain is Somatotropin (gh) from Pagrus major (Red sea bream).